Reading from the N-terminus, the 669-residue chain is L-type lectin-domain containing receptor kinase V.9 (669 aa).

The signal sequence occupies residues 1-21 (MKFFVLVLLLVLQFFSNKALS). Over 22–286 (QSEEGEFGFN…RDSRSTSVKK (265 aa)) the chain is Extracellular. Residues 38–259 (SGIAITNSKG…SHYILGWTFK (222 aa)) are legume-lectin like. Asparagine 53, asparagine 75, asparagine 124, asparagine 206, and asparagine 261 each carry an N-linked (GlcNAc...) asparagine glycan. A helical membrane pass occupies residues 287 to 307 (ILAISLSLTSLAILVFLTISY). Residues 308-669 (MLFLKRKKLM…FTEPFVSHGR (362 aa)) lie on the Cytoplasmic side of the membrane. The 260-residue stretch at 344–603 (FRNSELLGKG…LGLFCSHPVA (260 aa)) folds into the Protein kinase domain. Residues 350-358 (LGKGGFGKV) and lysine 373 contribute to the ATP site. Aspartate 469 acts as the Proton acceptor in catalysis.

In the C-terminal section; belongs to the protein kinase superfamily. Ser/Thr protein kinase family. The protein in the N-terminal section; belongs to the leguminous lectin family.

The protein resides in the cell membrane. It catalyses the reaction L-seryl-[protein] + ATP = O-phospho-L-seryl-[protein] + ADP + H(+). It carries out the reaction L-threonyl-[protein] + ATP = O-phospho-L-threonyl-[protein] + ADP + H(+). In Arabidopsis thaliana (Mouse-ear cress), this protein is L-type lectin-domain containing receptor kinase V.9 (LECRK59).